The following is a 222-amino-acid chain: Cytidylate kinase (222 aa).

11-19 (GPAGAGKST) provides a ligand contact to ATP.

Belongs to the cytidylate kinase family. Type 1 subfamily.

The protein resides in the cytoplasm. The enzyme catalyses CMP + ATP = CDP + ADP. The catalysed reaction is dCMP + ATP = dCDP + ADP. The polypeptide is Cytidylate kinase (Desulforamulus reducens (strain ATCC BAA-1160 / DSM 100696 / MI-1) (Desulfotomaculum reducens)).